A 250-amino-acid polypeptide reads, in one-letter code: Flap endonuclease Xni (250 aa).

Asp104 serves as a coordination point for Mg(2+). The 5'-3' exonuclease domain occupies 160 to 249 (VQPQQLTDFW…LQGNLQQLRL (90 aa)). Leu171, Ala172, Pro180, Val182, and Ile185 together coordinate K(+). The interval 184–189 (GIGPKS) is interaction with DNA.

It belongs to the Xni family. The cofactor is Mg(2+). It depends on K(+) as a cofactor.

Has flap endonuclease activity. During DNA replication, flap endonucleases cleave the 5'-overhanging flap structure that is generated by displacement synthesis when DNA polymerase encounters the 5'-end of a downstream Okazaki fragment. The protein is Flap endonuclease Xni of Sodalis glossinidius (strain morsitans).